The sequence spans 1485 residues: Chromosome partition protein MukB (1485 aa).

34–41 contributes to the ATP binding site; that stretch reads GGNGAGKS. 2 coiled-coil regions span residues 337-480 and 509-605; these read LNLV…QAYQ and QHLA…PVWL. Positions 666-783 are flexible hinge; that stretch reads PSGAEDARLI…EVPLFGRAAR (118 aa). Coiled coils occupy residues 835–915 and 977–1116; these read EAEI…IQQH and GMLT…AKAG.

The protein belongs to the SMC family. MukB subfamily. As to quaternary structure, homodimerization via its hinge domain. Binds to DNA via its C-terminal region. Interacts, and probably forms a ternary complex, with MukE and MukF via its C-terminal region. The complex formation is stimulated by calcium or magnesium. Interacts with tubulin-related protein FtsZ.

It is found in the cytoplasm. The protein localises to the nucleoid. Its function is as follows. Plays a central role in chromosome condensation, segregation and cell cycle progression. Functions as a homodimer, which is essential for chromosome partition. Involved in negative DNA supercoiling in vivo, and by this means organize and compact chromosomes. May achieve or facilitate chromosome segregation by condensation DNA from both sides of a centrally located replisome during cell division. This Yersinia pseudotuberculosis serotype O:3 (strain YPIII) protein is Chromosome partition protein MukB.